The following is a 392-amino-acid chain: B2 bradykinin receptor (392 aa).

Residues 1–61 (MPCSWKLLGF…EWWSWLNAIQ (61 aa)) lie on the Extracellular side of the membrane. Asn29 and Asn40 each carry an N-linked (GlcNAc...) asparagine glycan. The chain crosses the membrane as a helical span at residues 62–85 (APFLWVLFLLAALENLFVLSVFFL). Residues 86–94 (HKNSCTVAE) lie on the Cytoplasmic side of the membrane. Residues 95-119 (IYLGNLAAADLILACGLPFWAITIA) form a helical membrane-spanning segment. Residues 120 to 132 (NNFDWVFGEVLCR) lie on the Extracellular side of the membrane. Cys131 and Cys212 are disulfide-bonded. The helical transmembrane segment at 133 to 154 (VVNTMIYMNLYSSICFLMLVSI) threads the bilayer. Residues 155-176 (DRYLALVKTMSMGRMRGVRWAK) are Cytoplasmic-facing. Tyr157 is modified (phosphotyrosine). A helical transmembrane segment spans residues 177 to 199 (LYSLVIWGCTLLLSSPMLVFRTM). Residues 200–222 (REYSEEGHNVTACVIVYPSRSWE) are Extracellular-facing. Asn208 is a glycosylation site (N-linked (GlcNAc...) asparagine). Residues 223 to 249 (VFTNVLLNLVGFLLPLSVITFCTVRIL) traverse the membrane as a helical segment. At 250–268 (QVLRNNEMKKFKEVQTERK) the chain is on the cytoplasmic side. The chain crosses the membrane as a helical span at residues 269 to 293 (ATVLVLAVLGLFVLCWVPFQISTFL). The Extracellular segment spans residues 294-312 (DTLLRLGVLSGCWDEHAVD). Residues 313–336 (VITQISSYVAYSNSGLNPLVYVIV) traverse the membrane as a helical segment. Topologically, residues 337-392 (GKRFRKKSREVYRVLCQKGGCMGEPVQMENSMGTLRTSISVERQIHKLQDWAGKKQ) are cytoplasmic. Tyr348 bears the Phosphotyrosine mark. Cys352 carries S-palmitoyl cysteine lipidation. Position 367 is a phosphoserine (Ser367). At Thr370 the chain carries Phosphothreonine. A phosphoserine; by GRK6 mark is found at Ser374 and Ser376.

This sequence belongs to the G-protein coupled receptor 1 family. Bradykinin receptor subfamily. BDKRB2 sub-subfamily. As to quaternary structure, forms a complex with PECAM1 and GNAQ. Interacts with PECAM1.

The protein localises to the cell membrane. In terms of biological role, receptor for bradykinin. It is associated with G proteins that activate a phosphatidylinositol-calcium second messenger system. In Mus musculus (Mouse), this protein is B2 bradykinin receptor (Bdkrb2).